Here is a 281-residue protein sequence, read N- to C-terminus: MGRFEGKVAVVTGAGAGIGKACALAIAREGGRVVVADIDGSAAIACTAQIAAEAGHALALAIDIADAQAVAALFETAERHFGGVDLLVNNASAMHLTPRDRAILELELAVWDQTMATNLRGTLLCCRQAIPRMIARGGGAIVNMSSCQGLSGDTALTSYAASKAAMNMLSSSLATQYGHAQIRCNAVAPGLIMTERLLAKLDACMQTHLRRHQLLPRVGRPEDVAALVAFLLSDDAAFITGQVVCIDGGMLAHVPTYADGGNSRAARPAGETAEADAAPRC.

10 to 34 (VVTGAGAGIGKACALAIAREGGRVV) lines the NAD(+) pocket. A substrate-binding site is contributed by Ser-146. The Proton acceptor role is filled by Tyr-159. Residues 261 to 281 (GNSRAARPAGETAEADAAPRC) are disordered.

The protein belongs to the short-chain dehydrogenases/reductases (SDR) family.

The sequence is that of Probable short-chain type dehydrogenase/reductase blr2146 from Bradyrhizobium diazoefficiens (strain JCM 10833 / BCRC 13528 / IAM 13628 / NBRC 14792 / USDA 110).